The following is a 969-amino-acid chain: MTESPTAGPGGVPRADDADSDVPRYRYTAELAARLERTWQENWARLGTFNVPNPVGSLAPPDGAAVPDDKLFVQDMFPYPSGEGLHVGHPLGYIATDVYARYFRMVGRNVLHALGFDAFGLPAEQYAVQTGTHPRTRTEANVVNFRRQLGRLGFGHDSRRSFSTTDVDFYRWTQWIFLQIYNAWFDTTANKARPISELVAEFESGARCLDGGRDWAKLTAGERADVIDEYRLVYRADSLVNWCPGLGTVLANEEVTADGRSDRGNFPVFRKRLRQWMMRITAYADRLLDDLDVLDWPEQVKTMQRNWIGRSTGAVALFSARAASDDGFEVDIEVFTTRPDTLFGATYLVLAPEHDLVDELVAASWPAGVNPLWTYGGGTPGEAIAAYRRAIAAKSDLERQESREKTGVFLGSYAINPANGEPVPIFIADYVLAGYGTGAIMAVPGHDQRDWDFARAFGLPIVEVIAGGNISESAYTGDGILVNSDYLNGMSVPAAKRAIVDRLESAGRGRARIEFKLRDWLFARQRYWGEPFPIVYDSDGRPHALDEAALPVELPDVPDYSPVLFDPDDADSEPSPPLAKATEWVHVDLDLGDGLKPYSRDTNVMPQWAGSSWYELRYTDPHNSERFCAKENEAYWMGPRPAEHGPDDPGGVDLYVGGAEHAVLHLLYSRFWHKVLYDLGHVSSREPYRRLVNQGYIQAYAYTDARGSYVPAEQVIERGDRFVYPGPDGEVEVFQEFGKIGKSLKNSVSPDEICDAYGADTLRVYEMSMGPLEASRPWATKDVVGAYRFLQRVWRLVVDEHTGETRVADGVELDIDTLRALHRTIVGVSEDFAALRNNTATAKLIEYTNHLTKKHRDAVPRAAVEPLVQMLAPLAPHIAEELWLRLGNTTSLAHGPFPKADAAYLVDETVEYPVQVNGKVRGRVVVAADTDEETLKAAVLTDEKVQAFLAGATPRKVIVVAGRLVNLVI.

The 'HIGH' region motif lies at 78–89; it reads PYPSGEGLHVGH. Residues 739 to 743 carry the 'KMSKS' region motif; that stretch reads KIGKS. Position 742 (K742) interacts with ATP.

This sequence belongs to the class-I aminoacyl-tRNA synthetase family.

It localises to the cytoplasm. It carries out the reaction tRNA(Leu) + L-leucine + ATP = L-leucyl-tRNA(Leu) + AMP + diphosphate. The chain is Leucine--tRNA ligase from Mycobacterium tuberculosis (strain ATCC 25177 / H37Ra).